Here is a 396-residue protein sequence, read N- to C-terminus: Phosphoglycerate kinase (396 aa).

Substrate is bound by residues Asp-21 to Asn-23, Arg-36, His-59 to Arg-62, Arg-119, and Arg-156. ATP contacts are provided by residues Lys-207, Glu-325, and Gly-352 to Ser-355.

Belongs to the phosphoglycerate kinase family. In terms of assembly, monomer.

The protein resides in the cytoplasm. It carries out the reaction (2R)-3-phosphoglycerate + ATP = (2R)-3-phospho-glyceroyl phosphate + ADP. It functions in the pathway carbohydrate degradation; glycolysis; pyruvate from D-glyceraldehyde 3-phosphate: step 2/5. In Lacticaseibacillus casei (strain BL23) (Lactobacillus casei), this protein is Phosphoglycerate kinase.